Here is an 882-residue protein sequence, read N- to C-terminus: Alanine--tRNA ligase (882 aa).

Residues His571, His575, Cys673, and His677 each contribute to the Zn(2+) site.

It belongs to the class-II aminoacyl-tRNA synthetase family. Requires Zn(2+) as cofactor.

The protein localises to the cytoplasm. The enzyme catalyses tRNA(Ala) + L-alanine + ATP = L-alanyl-tRNA(Ala) + AMP + diphosphate. In terms of biological role, catalyzes the attachment of alanine to tRNA(Ala) in a two-step reaction: alanine is first activated by ATP to form Ala-AMP and then transferred to the acceptor end of tRNA(Ala). Also edits incorrectly charged Ser-tRNA(Ala) and Gly-tRNA(Ala) via its editing domain. The chain is Alanine--tRNA ligase from Stenotrophomonas maltophilia (strain K279a).